Here is a 725-residue protein sequence, read N- to C-terminus: Glyoxysomal fatty acid beta-oxidation multifunctional protein MFP-a (725 aa).

The Nucleophile role is filled by E119. The active-site Proton acceptor is the E139. The short motif at 723–725 (SRL) is the Microbody targeting signal element.

It in the N-terminal section; belongs to the enoyl-CoA hydratase/isomerase family. In the central section; belongs to the 3-hydroxyacyl-CoA dehydrogenase family.

The protein resides in the glyoxysome. The catalysed reaction is a (3S)-3-hydroxyacyl-CoA = a (2E)-enoyl-CoA + H2O. It carries out the reaction a 4-saturated-(3S)-3-hydroxyacyl-CoA = a (3E)-enoyl-CoA + H2O. It catalyses the reaction a (3Z)-enoyl-CoA = a 4-saturated (2E)-enoyl-CoA. The enzyme catalyses a (3E)-enoyl-CoA = a 4-saturated (2E)-enoyl-CoA. The catalysed reaction is (3S)-3-hydroxybutanoyl-CoA = (3R)-3-hydroxybutanoyl-CoA. It carries out the reaction a (3S)-3-hydroxyacyl-CoA + NAD(+) = a 3-oxoacyl-CoA + NADH + H(+). Its pathway is lipid metabolism; fatty acid beta-oxidation. In Brassica napus (Rape), this protein is Glyoxysomal fatty acid beta-oxidation multifunctional protein MFP-a.